We begin with the raw amino-acid sequence, 81 residues long: Small ribosomal subunit protein uS17 (81 aa).

This sequence belongs to the universal ribosomal protein uS17 family. As to quaternary structure, part of the 30S ribosomal subunit.

Functionally, one of the primary rRNA binding proteins, it binds specifically to the 5'-end of 16S ribosomal RNA. The chain is Small ribosomal subunit protein uS17 from Hyphomonas neptunium (strain ATCC 15444).